A 400-amino-acid polypeptide reads, in one-letter code: DNA primase small subunit PriS (400 aa).

Residues aspartate 98, aspartate 100, and aspartate 306 contribute to the active site.

This sequence belongs to the eukaryotic-type primase small subunit family. Heterodimer of a small subunit (PriS) and a large subunit (PriL). Mg(2+) serves as cofactor. It depends on Mn(2+) as a cofactor.

In terms of biological role, catalytic subunit of DNA primase, an RNA polymerase that catalyzes the synthesis of short RNA molecules used as primers for DNA polymerase during DNA replication. The small subunit contains the primase catalytic core and has DNA synthesis activity on its own. Binding to the large subunit stabilizes and modulates the activity, increasing the rate of DNA synthesis while decreasing the length of the DNA fragments, and conferring RNA synthesis capability. The DNA polymerase activity may enable DNA primase to also catalyze primer extension after primer synthesis. May also play a role in DNA repair. The polypeptide is DNA primase small subunit PriS (Methanocella arvoryzae (strain DSM 22066 / NBRC 105507 / MRE50)).